The sequence spans 648 residues: Activatory protein CHA4 (648 aa).

The span at 1-10 (MMLEPSPPPL) shows a compositional bias: pro residues. Residues 1 to 37 (MMLEPSPPPLTTTVTPSLPSSLKKSVTDNDQNNNNVP) are disordered. Over residues 11 to 22 (TTTVTPSLPSSL) the composition is skewed to low complexity. The segment at residues 44–70 (CQNCRRRRRKCNMEKPCSNCIKFRTEC) is a DNA-binding region (zn(2)-C6 fungal-type). Positions 140 to 177 (AQSALPSSESNDENESDAFTKKMPSESPPPVGTNSIYP) are disordered. Ser164 and Ser166 each carry phosphoserine.

It localises to the nucleus. Activates the CHA1 gene for L-serine dehydratase. Binds to the DNA sequence 5'-GVGGARAYRTRATTCCRC-3'. The polypeptide is Activatory protein CHA4 (CHA4) (Saccharomyces cerevisiae (strain ATCC 204508 / S288c) (Baker's yeast)).